Here is a 459-residue protein sequence, read N- to C-terminus: Bifunctional protein GlmU (459 aa).

Positions 1–230 (MSNRFAVILA…FDETLGVNDR (230 aa)) are pyrophosphorylase. Residues 9–12 (LAAG), K23, Q73, and 78–79 (GT) contribute to the UDP-N-acetyl-alpha-D-glucosamine site. D103 provides a ligand contact to Mg(2+). G140, E155, N170, and N228 together coordinate UDP-N-acetyl-alpha-D-glucosamine. A Mg(2+)-binding site is contributed by N228. A linker region spans residues 231 to 251 (VALSQAEVIMKNRINHKNMVN). The interval 252-459 (GVTIIDPSNT…VDQLLNKKKS (208 aa)) is N-acetyltransferase. The UDP-N-acetyl-alpha-D-glucosamine site is built by R333 and K351. H363 serves as the catalytic Proton acceptor. UDP-N-acetyl-alpha-D-glucosamine is bound by residues Y366 and N377. Residues 386-387 (NY), A423, and R440 contribute to the acetyl-CoA site.

In the N-terminal section; belongs to the N-acetylglucosamine-1-phosphate uridyltransferase family. The protein in the C-terminal section; belongs to the transferase hexapeptide repeat family. Homotrimer. Mg(2+) serves as cofactor.

The protein resides in the cytoplasm. The enzyme catalyses alpha-D-glucosamine 1-phosphate + acetyl-CoA = N-acetyl-alpha-D-glucosamine 1-phosphate + CoA + H(+). The catalysed reaction is N-acetyl-alpha-D-glucosamine 1-phosphate + UTP + H(+) = UDP-N-acetyl-alpha-D-glucosamine + diphosphate. It functions in the pathway nucleotide-sugar biosynthesis; UDP-N-acetyl-alpha-D-glucosamine biosynthesis; N-acetyl-alpha-D-glucosamine 1-phosphate from alpha-D-glucosamine 6-phosphate (route II): step 2/2. Its pathway is nucleotide-sugar biosynthesis; UDP-N-acetyl-alpha-D-glucosamine biosynthesis; UDP-N-acetyl-alpha-D-glucosamine from N-acetyl-alpha-D-glucosamine 1-phosphate: step 1/1. It participates in bacterial outer membrane biogenesis; LPS lipid A biosynthesis. In terms of biological role, catalyzes the last two sequential reactions in the de novo biosynthetic pathway for UDP-N-acetylglucosamine (UDP-GlcNAc). The C-terminal domain catalyzes the transfer of acetyl group from acetyl coenzyme A to glucosamine-1-phosphate (GlcN-1-P) to produce N-acetylglucosamine-1-phosphate (GlcNAc-1-P), which is converted into UDP-GlcNAc by the transfer of uridine 5-monophosphate (from uridine 5-triphosphate), a reaction catalyzed by the N-terminal domain. This is Bifunctional protein GlmU from Bacillus cytotoxicus (strain DSM 22905 / CIP 110041 / 391-98 / NVH 391-98).